The primary structure comprises 189 residues: MAKSQNKESPELRTPNRFITDHDASGLSVFNTSIPDALPAQVIGGRDRFHLAYATTTSPVDLTNQSDIVTYSSFLSTPPGIFLPGGSVLRIVDVRPGGESLMHRTESIDYGVVLDGEIDLVLDSGESRILKRGDVAVQRGTNHLWRNRSHTAWGRMVFVTLEAKPIEIDGKLLGGVTGLGMDDTSPAGN.

Belongs to the oryJ family.

Part of the gene cluster that mediates the biosynthesis of the phomopsins, a group of hexapeptide mycotoxins which infects lupins and causes lupinosis disease in livestock. The role of phomC within the phomopsins biosynthesis pathway has still to be determined. The pathway starts with the processing of the precursor phomA by several endopeptidases including kexin proteases as well as the cluster-specific S41 family peptidase phomP1 and the oligopeptidase phomG to produce 10 identical copies of the hexapeptide Tyr-Val-Ile-Pro-Ile-Asp. After being excised from the precursor peptide, the core peptides are cyclized and modified post-translationally by enzymes encoded within the gene cluster. The timing and order of proteolysis of the phomA precursor and PTMs are still unknown. Two tyrosinase-like enzymes, phomQ1 and phomQ2, catalyze the chlorination and hydroxylation of Tyr, respectively. PhomYb, is proposed to be involved in the construction of the macrocyclic structure. The other 4 ustYa family proteins may be involved in PTMs that generate the unique structure of phomopsin A. PhomYa is required for the hydroxylation of C-beta of Tyr. PhomYc, phomYd, and phomYe are responsible for the biosynthesis of 2,3-dehydroisoleucine (dIle), 2,3-dehydroaspartic acid (dAsp), and 3,4-dehydroproline (dPro), respectively. While dIle formation by phomYc is indispensable for the installation of dAsp by phomYd, the order of the other PTMs have not been elucidated yet. Most of the biosynthetic enzymes likely have broad substrate specificity, and thus, there might be a metabolic grid from a precursor to phomopsin A. The enzyme(s) responsible for the biosynthesis of 3,4-dehydrovaline (dVal) have also not been identified yet. Finally, phomM acts as an S-adenosylmethionine-dependent alpha-N-methyltransferase that catalyzes two successive N-methylation reactions, converting N-desmethyl-phomopsin A to phomopsin A and phomopsin A further to an N,N-dimethylated congener called phomopsin E. The sequence is that of Phomopsin biosynthesis cluster protein D from Diaporthe leptostromiformis (Lupinosis disease fungus).